We begin with the raw amino-acid sequence, 466 residues long: Ribulose bisphosphate carboxylase large chain (466 aa).

K5 is subject to N6,N6,N6-trimethyllysine. Residues N114 and T164 each coordinate substrate. K166 serves as the catalytic Proton acceptor. Residue K168 participates in substrate binding. Residues K192, D194, and E195 each contribute to the Mg(2+) site. At K192 the chain carries N6-carboxylysine. H285 acts as the Proton acceptor in catalysis. Substrate-binding residues include R286, H318, and S370.

Belongs to the RuBisCO large chain family. Type I subfamily. In terms of assembly, heterohexadecamer of 8 large chains and 8 small chains; disulfide-linked. The disulfide link is formed within the large subunit homodimers. Requires Mg(2+) as cofactor. Post-translationally, the disulfide bond which can form in the large chain dimeric partners within the hexadecamer appears to be associated with oxidative stress and protein turnover.

It localises to the plastid. The protein localises to the chloroplast. The enzyme catalyses 2 (2R)-3-phosphoglycerate + 2 H(+) = D-ribulose 1,5-bisphosphate + CO2 + H2O. The catalysed reaction is D-ribulose 1,5-bisphosphate + O2 = 2-phosphoglycolate + (2R)-3-phosphoglycerate + 2 H(+). Its function is as follows. RuBisCO catalyzes two reactions: the carboxylation of D-ribulose 1,5-bisphosphate, the primary event in carbon dioxide fixation, as well as the oxidative fragmentation of the pentose substrate in the photorespiration process. Both reactions occur simultaneously and in competition at the same active site. The protein is Ribulose bisphosphate carboxylase large chain of Eremothamnus marlothianus.